A 246-amino-acid polypeptide reads, in one-letter code: Small ribosomal subunit protein uS2 (246 aa).

The protein belongs to the universal ribosomal protein uS2 family.

The chain is Small ribosomal subunit protein uS2 from Chromohalobacter salexigens (strain ATCC BAA-138 / DSM 3043 / CIP 106854 / NCIMB 13768 / 1H11).